We begin with the raw amino-acid sequence, 287 residues long: Lipoyl synthase (287 aa).

The [4Fe-4S] cluster site is built by Cys34, Cys39, Cys45, Cys60, Cys64, Cys67, and Ser273. Positions 46 to 262 (WNKRHATVMI…KYIAYSKGFL (217 aa)) constitute a Radical SAM core domain.

Belongs to the radical SAM superfamily. Lipoyl synthase family. [4Fe-4S] cluster serves as cofactor.

It is found in the cytoplasm. It carries out the reaction [[Fe-S] cluster scaffold protein carrying a second [4Fe-4S](2+) cluster] + N(6)-octanoyl-L-lysyl-[protein] + 2 oxidized [2Fe-2S]-[ferredoxin] + 2 S-adenosyl-L-methionine + 4 H(+) = [[Fe-S] cluster scaffold protein] + N(6)-[(R)-dihydrolipoyl]-L-lysyl-[protein] + 4 Fe(3+) + 2 hydrogen sulfide + 2 5'-deoxyadenosine + 2 L-methionine + 2 reduced [2Fe-2S]-[ferredoxin]. Its pathway is protein modification; protein lipoylation via endogenous pathway; protein N(6)-(lipoyl)lysine from octanoyl-[acyl-carrier-protein]: step 2/2. Functionally, catalyzes the radical-mediated insertion of two sulfur atoms into the C-6 and C-8 positions of the octanoyl moiety bound to the lipoyl domains of lipoate-dependent enzymes, thereby converting the octanoylated domains into lipoylated derivatives. The protein is Lipoyl synthase of Wolbachia sp. subsp. Brugia malayi (strain TRS).